The primary structure comprises 467 residues: MKTLKQAESYIKSKVNTGTDFDGLYGYQCMDLAVDYIYHVTDGKIRMWGNAKDAINNSFGGTATVYKNYPAFRPKYGDVVVWTTGNFATYGHIAIVTNPDPYGDLQYVTVLEQNWNGNGIYKTELATIRTHDYTGITHFIRPNFATESSVKKKDTKKKPKPSNRDGINKDKIVYDRTNINYNMVKRGYNPVGVILHNDAGSMTGLQYKNNLQNAGYNRWAQGIAHSYISEGQVWQALGESRIAWHCANQWGNKNLYGIEICQSMTASDEQFLKNEQTAFYEASRMLKKWGLKPDKNTVRLHMEYYQTACPHRSMKLHVGKDPTKTSITQADIEKLKEYFIKQIKMYYEGKTPVPTVVNQKAKTKPVKQSSTSGWNVNNYGTYYKSESATFKCTARQGIVTRYTGPFTTCPQAGVLYYGQSVTYDTVCKQDGYVWISWTTNGGQDVWMPVRTWDKNTDIMGQLWGDIY.

Residues 4–141 (LKQAESYIKS…DYTGITHFIR (138 aa)) form the Peptidase C51 domain. Ca(2+) is bound by residues D20 and D22. C29 functions as the For endopeptidase activity in the catalytic mechanism. D31 provides a ligand contact to Ca(2+). Residues H92 and E112 each act as for endopeptidase activity in the active site. Residues 148–169 (SSVKKKDTKKKPKPSNRDGINK) are disordered. The 123-residue stretch at 189–311 (NPVGVILHND…MEYYQTACPH (123 aa)) folds into the N-acetylmuramoyl-L-alanine amidase domain. Zn(2+) contacts are provided by H196, H301, and C309. Positions 385–455 (SESATFKCTA…WMPVRTWDKN (71 aa)) constitute an SH3b domain.

The protein belongs to the N-acetylmuramoyl-L-alanine amidase 2 family. Zn(2+) is required as a cofactor.

It carries out the reaction Hydrolyzes the link between N-acetylmuramoyl residues and L-amino acid residues in certain cell-wall glycopeptides.. Endolysin that degrades host peptidoglycans and participates in the sequential events which lead to the programmed host cell lysis releasing the mature viral particles. The CHAP activity cleaves the peptidic bond between the D-alanine of the tetra-peptide stem and the first glycine of the penta-glycine cross-bridge. The N-acetyl-muramidase activity cleaves between N-acetylmuramic acid and N-acetylglucosamine bonds. The sequence is that of Endolysin PlyTW (plyTW) from Twortvirus twort (Bacteriophage Twort).